Here is a 370-residue protein sequence, read N- to C-terminus: Ig heavy chain C region (370 aa).

Ig-like domains are found at residues 40–134, 145–237, and 247–347; these read PTVI…RNIT, PAIK…DSIH, and PSVS…RTVN. Residues Asn98, Asn132, Asn177, Asn343, Asn347, and Asn357 are each glycosylated (N-linked (GlcNAc...) asparagine).

The polypeptide is Ig heavy chain C region (Heterodontus francisci (Horn shark)).